An 87-amino-acid chain; its full sequence is Small ribosomal subunit protein bS20 (87 aa).

The tract at residues 1-22 (MANSAGSKKRARQAVKSRAHNG) is disordered. The segment covering 7 to 19 (SKKRARQAVKSRA) has biased composition (basic residues).

It belongs to the bacterial ribosomal protein bS20 family.

Its function is as follows. Binds directly to 16S ribosomal RNA. The polypeptide is Small ribosomal subunit protein bS20 (Marinomonas sp. (strain MWYL1)).